The chain runs to 279 residues: MSVVSLLGVNVLNNPAKFVDKYEFEITFECLEQLEKDLEWKLTYVGSATSDQYDQELDSLLVGPIPVGVNKFIFEADAPNISRIPDAEILGVTVILLTCAYDGREFIRVGYYVNNEYDSEELNAEPPVKPIIERVKRNVLAEKPRVTRFAIKWDSEASAPAEYPPEQPEADLVADGDEYGAEEADEEAAEEAEEEAKSKGKASSGEDAEMAGVEHEGENAADEDELSDDGSVDIEGESEDDLEEEEEGEGEGEADGDAMEVDSAEKPATSTAKPVSVAS.

Composition is skewed to acidic residues over residues 179–194 (YGAE…EAEE) and 219–262 (NAAD…MEVD). The interval 179-279 (YGAEEADEEA…STAKPVSVAS (101 aa)) is disordered. Over residues 268 to 279 (ATSTAKPVSVAS) the composition is skewed to polar residues.

This sequence belongs to the ASF1 family. As to quaternary structure, interacts with histone H3 and histone H4.

Its subcellular location is the nucleus. Histone chaperone that facilitates histone deposition and histone exchange and removal during nucleosome assembly and disassembly. The protein is Histone chaperone ASF1 (ASF1) of Gibberella zeae (strain ATCC MYA-4620 / CBS 123657 / FGSC 9075 / NRRL 31084 / PH-1) (Wheat head blight fungus).